Here is a 349-residue protein sequence, read N- to C-terminus: Isopentenyl-diphosphate delta-isomerase (349 aa).

7 to 8 provides a ligand contact to substrate; that stretch reads RK. Residues Ser-65, 66–68, Ser-96, and Asn-124 contribute to the FMN site; that span reads SMT. 96–98 lines the substrate pocket; sequence SQR. Gln-159 lines the substrate pocket. Residue Glu-160 coordinates Mg(2+). Residues Lys-191, Thr-221, 271–273, and 292–293 each bind FMN; these read GIR and AA.

It belongs to the IPP isomerase type 2 family. In terms of assembly, homooctamer. Dimer of tetramers. FMN is required as a cofactor. It depends on NADPH as a cofactor. The cofactor is Mg(2+).

It is found in the cytoplasm. It carries out the reaction isopentenyl diphosphate = dimethylallyl diphosphate. Involved in the biosynthesis of isoprenoids. Catalyzes the 1,3-allylic rearrangement of the homoallylic substrate isopentenyl (IPP) to its allylic isomer, dimethylallyl diphosphate (DMAPP). The protein is Isopentenyl-diphosphate delta-isomerase of Synechocystis sp. (strain ATCC 27184 / PCC 6803 / Kazusa).